Reading from the N-terminus, the 575-residue chain is Protein NRD1 (575 aa).

Residues 1 to 153 form the CID domain; the sequence is MQQDDDFQNF…AIRSKCFAMD (153 aa). Residues 225–282 are disordered; sequence SHTSVGTVAPPQAHTITEYGSRRERERERERYNSRRNRSRSPPAPFSQPSTGRKDRYP. The segment covering 244–257 has biased composition (basic and acidic residues); sequence GSRRERERERERYN. Phosphoserine is present on residues S263, S265, and S271. The RRM domain occupies 339–409; that stretch reads RTLFIGGVPL…LPLRTRWGVG (71 aa). The interval 468-575 is disordered; the sequence is VSSKAISQKM…NQQQQQQQQS (108 aa). Composition is skewed to polar residues over residues 471 to 482 and 491 to 501; these read KAISQKMPTDSG and PNKSGSISSIS. Low complexity-rich tracts occupy residues 517–527 and 549–575; these read QYVQPMMQQPY and QQQFDPTAQLNSLMNMLNQQQQQQQQS.

The protein resides in the nucleus. Functionally, plays a role in sequence-specific regulation of nuclear pre-mRNA abundance. This Saccharomyces cerevisiae (strain ATCC 204508 / S288c) (Baker's yeast) protein is Protein NRD1 (NRD1).